Here is a 200-residue protein sequence, read N- to C-terminus: FSQKYIELVVVADHGMFTKYNGNLNTIRTRVHEIVNTLNGFYRSLNILISLTDLEIWSNQDLINVQSAANDTLKTFGEWRERVLLNRISHDNAQLLTAIDLADNTIGIAYTGGMCYPKNSVGIVQDHSPKTLLIAVTMAHELGHNLGMKHDENHCHCSASFCIMPPSISEGPSYEFSDCSKDYYQMFLTKRKPQCILNKP.

One can recognise a Peptidase M12B domain in the interval 4–200 (KYIELVVVAD…RKPQCILNKP (197 aa)). A Ca(2+)-binding site is contributed by Glu-7. N-linked (GlcNAc...) asparagine glycosylation is present at Asn-70. Position 91 (Asp-91) interacts with Ca(2+). 3 disulfide bridges follow: Cys-115–Cys-195, Cys-155–Cys-179, and Cys-157–Cys-162. His-140 is a binding site for Zn(2+). The active site involves Glu-141. Positions 144 and 150 each coordinate Zn(2+). The Ca(2+) site is built by Cys-195 and Asn-198.

It belongs to the venom metalloproteinase (M12B) family. P-I subfamily. As to quaternary structure, monomer. Zn(2+) is required as a cofactor. Expressed by the venom gland.

Its subcellular location is the secreted. Functionally, snake venom zinc metalloproteinase that induces weak hemorrhage and mild myonecrosis. Shows mild myotoxicity by killing myocytes. Also induces edema in the mouse footpad at doses where hemorrhage is absent. In vitro, degrades laminin, fibronectin, and type IV collagen, suggesting this toxin play a role in local tissue damage by degrading extracellular matrix, and possibly by degrading muscle extracellular matrix. Hemorrhage is not due to cytotoxicity towards endothelial cells in culture, and may only play a minor role in local bleeding characteristic of L.muta envenomations. Also induces the synthesis of several endogenous matrix metalloproteinases, which in turn, may participate in extracellular matrix degradation. The sequence is that of Snake venom metalloproteinase hemorrhagic factor 2 from Lachesis muta muta (Bushmaster).